Reading from the N-terminus, the 249-residue chain is Cytoplasmic envelopment protein 1 (249 aa).

It belongs to the herpesviridae cytoplasmic envelopment protein 1 family.

It localises to the virion. The protein localises to the virion tegument. The protein resides in the host cytoplasm. It is found in the host Golgi apparatus. Its function is as follows. Plays a critical role in cytoplasmic virus egress. Participates in the final step of tegumentation and envelope acquisition within the host cytoplasm. The sequence is that of Cytoplasmic envelopment protein 1 (U75) from Homo sapiens (Human).